The chain runs to 421 residues: Ethanolamine-phosphate cytidylyltransferase (421 aa).

A helical membrane pass occupies residues 8-28; sequence IVGSCIVGGAAFAVGASFLHL. Positions 203-227 are disordered; that stretch reads SRSSLQRQFSHGHSSPKFEDGASSA. Positions 204–215 are enriched in polar residues; that stretch reads RSSLQRQFSHGH. CTP-binding positions include 262–263, 270–273, R298, 346–349, and 377–381; these read AF, HVEI, HGTV, and SPLDI. The tract at residues 402–421 is disordered; the sequence is AKKEASEKKYYEQKSFVSGD. Over residues 403–413 the composition is skewed to basic and acidic residues; the sequence is KKEASEKKYYE. S416 carries the post-translational modification Phosphoserine.

It belongs to the cytidylyltransferase family. In terms of tissue distribution, expressed in root tip, lateral root primordia, leaves, shoot apex, stem vascular bundles, pollen and embryos.

The protein resides in the mitochondrion outer membrane. The catalysed reaction is phosphoethanolamine + CTP + H(+) = CDP-ethanolamine + diphosphate. The protein operates within phospholipid metabolism; phosphatidylethanolamine biosynthesis; phosphatidylethanolamine from ethanolamine: step 2/3. Its function is as follows. Plays an important role in the biosynthesis of the phospholipid phosphatidylethanolamine. Catalyzes the formation of CDP-ethanolamine. Essential for early embryonic development. This chain is Ethanolamine-phosphate cytidylyltransferase, found in Arabidopsis thaliana (Mouse-ear cress).